The primary structure comprises 268 residues: Microtubule-associated protein RP/EB family member 1 (268 aa).

Ala2 is subject to N-acetylalanine. Residues Asn14 to Asp116 form the Calponin-homology (CH) domain. The residue at position 66 (Lys66) is an N6-crotonyllysine. At Tyr124 the chain carries Phosphotyrosine. Residues Tyr124 to Tyr268 are interaction with MTUS2/TIP150. The tract at residues Leu146–Gly187 is disordered. The segment covering Leu153 to Thr169 has biased composition (polar residues). Phosphoserine occurs at positions 155 and 165. The EB1 C-terminal domain occupies Gly185–Ile255. The tract at residues Gly185 to Tyr268 is interaction with CDK5RAP2. The tract at residues Thr206–Glu211 is interaction with APC. Residues Glu208–Tyr268 are DCTN1-binding. Lys220 bears the N6-acetyllysine mark. Residues Lys220–Ile242 are APC-binding. An interaction with SKA1 region spans residues Glu232–Ile255.

This sequence belongs to the MAPRE family. In terms of assembly, homodimer. Heterodimer with MAPRE3. Interacts with DCTN1, DCTN2, TERF1 and dynein intermediate chain. Interaction with DIAPH1 and DIAPH2. Interacts (via C-terminal residues 206-211) with APC (via C-terminal residues 2674-2843); the interaction inhibits association with and bundling of F-actin. Interacts with CLASP2, DST, KIF2C and STIM1; probably required for their targeting to the growing microtubule plus ends. Interacts with MTUS2; interaction is direct and probably targets MTUS2 to microtubules. Interacts (via C-terminus) with SKA1 (via SXIP motif); the interaction is direct and stabilizes the kinetochore-microtubule attachment of the SKA1 complex. Interacts with APC2. Interacts with CLASP1. Interacts with CDK5RAP2. Interacts with MACF1. Interacts with RABL2/RABL2A; binds preferentially to GTP-bound RABL2. Interacts with KCNAB2. Interacts (via C-terminus) with CLIP1. Interacts with SLAIN2 and SLAIN1. Interacts with KIF18B; this interaction is required for efficient accumulation of KIF18B at microtubule plus ends. Interacts with MISP. Interacts with KNSTRN. Interacts with NCKAP5L. Interacts with CAMSAP2. Interacts with PDE4DIP isoform 13/MMG8/SMYLE; this interaction is required for its recruitment to the Golgi apparatus. Forms a pericentrosomal complex with AKAP9, CDK5RAP2 and PDE4DIP isoform 13/MMG8/SMYLE; within this complex, MAPRE1 binding to CDK5RAP2 may be mediated by PDE4DIP. Interacts with AKNA. Interacts with GAS2L1, GAS2L2, and GAS2L3. Interacts with RARRES1 and AGBL2. Acetylation at Lys-220 by KAT2B/PCAF promotes dynamic kinetochore-microtubule interactions in early mitosis. In terms of processing, crotonylated by KAT5 during mitosis, promoting astral microtubule plasticity and dynamic connection between astral microtubules and the cortex during mitotic chromosome segregation, thereby ensuring accurate spindle positioning in mitosis. Decrotonylated by HDAC3. As to expression, ubiquitously expressed.

The protein resides in the cytoplasm. The protein localises to the cytoskeleton. It localises to the microtubule organizing center. Its subcellular location is the centrosome. It is found in the golgi apparatus. The protein resides in the spindle. The protein localises to the spindle pole. In terms of biological role, plus-end tracking protein (+TIP) that binds to the plus-end of microtubules and regulates the dynamics of the microtubule cytoskeleton. Recruits other +TIP proteins to microtubules by binding to a conserved Ser-X-Leu-Pro (SXLP) motif in their polypeptide chains. Promotes cytoplasmic microtubule nucleation and elongation. Involved in mitotic spindle positioning by stabilizing microtubules and promoting dynamic connection between astral microtubules and the cortex during mitotic chromosome segregation. Assists chromosome alignment in metaphase by recruiting the SKA complex to the spindle and stabilizing its interactions with microtubule bundles (K-fibers). Also acts as a regulator of minus-end microtubule organization: interacts with the complex formed by AKAP9 and PDE4DIP, leading to recruit CAMSAP2 to the Golgi apparatus, thereby tethering non-centrosomal minus-end microtubules to the Golgi, an important step for polarized cell movement. Promotes elongation of CAMSAP2-decorated microtubule stretches on the minus-end of microtubules. Acts as a regulator of autophagosome transport via interaction with CAMSAP2. Functions downstream of Rho GTPases and DIAPH1 in stable microtubule formation. May play a role in cell migration. The polypeptide is Microtubule-associated protein RP/EB family member 1 (Homo sapiens (Human)).